Consider the following 307-residue polypeptide: MATKKIRCALIGSGNIGTDLIYKLKRSAVLEPVWMVGIDAASEGLQRARDLGLKTTAEGVDGLLPHVKADGIQIAFDATSAYVHPENSRKLNALGVLMVDLTPAAVGPLCVPPVNLREHAAKLEMNVNMISCAGQATIPIVYAVSRVQPVDYAEIVASLASKSIGPGTRANLDEFTYTTSDALVRVGGARRGKALAVINPAEPPMIMRNTINCLTDDEPQQARIIDSVLSMIEEVQQYVPGYKLVNGPVFDGRRVSVFMQVAGLGDYLPTYAGNLDIMTAAACRTAEMFAEEILAGTLQLTPVKEAA.

13–16 is an NAD(+) binding site; that stretch reads SGNI. Residue C132 is the Acyl-thioester intermediate of the active site. NAD(+)-binding positions include 163–171 and N274; that span reads SIGPGTRAN.

The protein belongs to the acetaldehyde dehydrogenase family.

The enzyme catalyses acetaldehyde + NAD(+) + CoA = acetyl-CoA + NADH + H(+). The protein is Acetaldehyde dehydrogenase 2 of Methylibium petroleiphilum (strain ATCC BAA-1232 / LMG 22953 / PM1).